The following is a 261-amino-acid chain: 3-methyl-2-oxobutanoate hydroxymethyltransferase (261 aa).

Residues D42 and D81 each contribute to the Mg(2+) site. Residues 42–43 (DS), D81, and K110 contribute to the 3-methyl-2-oxobutanoate site. Residue E112 participates in Mg(2+) binding. E179 acts as the Proton acceptor in catalysis.

It belongs to the PanB family. Homodecamer; pentamer of dimers. The cofactor is Mg(2+).

Its subcellular location is the cytoplasm. The enzyme catalyses 3-methyl-2-oxobutanoate + (6R)-5,10-methylene-5,6,7,8-tetrahydrofolate + H2O = 2-dehydropantoate + (6S)-5,6,7,8-tetrahydrofolate. It participates in cofactor biosynthesis; coenzyme A biosynthesis. Functionally, catalyzes the reversible reaction in which hydroxymethyl group from 5,10-methylenetetrahydrofolate is transferred onto alpha-ketoisovalerate to form ketopantoate. The sequence is that of 3-methyl-2-oxobutanoate hydroxymethyltransferase from Pyrobaculum islandicum (strain DSM 4184 / JCM 9189 / GEO3).